Consider the following 570-residue polypeptide: Mitoguardin 1 (570 aa).

Residues glycine 34–cysteine 54 traverse the membrane as a helical segment.

It belongs to the mitoguardin family. Homodimer and heterodimer; forms heterodimers with miga2.

Its subcellular location is the mitochondrion outer membrane. Functionally, regulator of mitochondrial fusion: acts by forming homo- and heterodimers at the mitochondrial outer membrane and facilitating the formation of pld6/MitoPLD dimers. May act by regulating phospholipid metabolism via pld6/MitoPLD. The polypeptide is Mitoguardin 1 (Xenopus laevis (African clawed frog)).